We begin with the raw amino-acid sequence, 121 residues long: Large ribosomal subunit protein bL19 (121 aa).

It belongs to the bacterial ribosomal protein bL19 family.

This protein is located at the 30S-50S ribosomal subunit interface and may play a role in the structure and function of the aminoacyl-tRNA binding site. This is Large ribosomal subunit protein bL19 from Chlorobium phaeovibrioides (strain DSM 265 / 1930) (Prosthecochloris vibrioformis (strain DSM 265)).